Reading from the N-terminus, the 357-residue chain is MLDKLAFLEEKYEDLSEKISEPEIINDQPQWKKLVKEHSDLEEIVMKYREYKKTEQGLNDAKEILRDKTADEEFREMAKMEIAELEEKIEVLEGELKILLLPKDPNDDKDVIVEIRAGAGGDEAGLFAADLFRMYTRYAENVGWKVEMMSANDTGIGGYKEVIFMIKGHGAYSRLKYESGVHRVQRIPSTESGGRIHTSTITVAVLPEADDVDFELDMNDIRVDVFRSSGNGGQSVNTTDSAVRVTHIPTGTVVSCQDEKSQLKNKEKALKILRARLLDVLIQEQQAEIAQDRKSQVGTGDRSERIRTYNFPQGRITDHRINVTLYRLDSFLNGDIQEMIDALITTDQAEKLKEVNS.

The residue at position 234 (Gln-234) is an N5-methylglutamine.

The protein belongs to the prokaryotic/mitochondrial release factor family. Methylated by PrmC. Methylation increases the termination efficiency of RF1.

It is found in the cytoplasm. In terms of biological role, peptide chain release factor 1 directs the termination of translation in response to the peptide chain termination codons UAG and UAA. This chain is Peptide chain release factor 1, found in Alkaliphilus oremlandii (strain OhILAs) (Clostridium oremlandii (strain OhILAs)).